Reading from the N-terminus, the 179-residue chain is Large ribosomal subunit protein uL5 (179 aa).

The protein belongs to the universal ribosomal protein uL5 family. In terms of assembly, part of the 50S ribosomal subunit; part of the 5S rRNA/L5/L18/L25 subcomplex. Contacts the 5S rRNA and the P site tRNA. Forms a bridge to the 30S subunit in the 70S ribosome.

This is one of the proteins that bind and probably mediate the attachment of the 5S RNA into the large ribosomal subunit, where it forms part of the central protuberance. In the 70S ribosome it contacts protein S13 of the 30S subunit (bridge B1b), connecting the 2 subunits; this bridge is implicated in subunit movement. Contacts the P site tRNA; the 5S rRNA and some of its associated proteins might help stabilize positioning of ribosome-bound tRNAs. The sequence is that of Large ribosomal subunit protein uL5 from Geobacter sulfurreducens (strain ATCC 51573 / DSM 12127 / PCA).